The primary structure comprises 109 residues: Putative double-stranded DNA mimic protein YciU (109 aa).

It belongs to the putative dsDNA mimic protein family.

May act as a double-stranded DNA (dsDNA) mimic. Probably regulates the activity of a dsDNA-binding protein. The chain is Putative double-stranded DNA mimic protein YciU from Shigella boydii serotype 18 (strain CDC 3083-94 / BS512).